A 287-amino-acid polypeptide reads, in one-letter code: Shikimate dehydrogenase (NADP(+)) (287 aa).

Residues Ser20 to Ser22 and Thr67 contribute to the shikimate site. The active-site Proton acceptor is Lys71. Residue Glu84 coordinates NADP(+). Positions 93 and 108 each coordinate shikimate. NADP(+) contacts are provided by residues Gly132–Ala136, Asn156–Arg161, and Met226. Tyr228 is a binding site for shikimate. Gly250 contributes to the NADP(+) binding site.

Belongs to the shikimate dehydrogenase family. As to quaternary structure, homodimer.

The enzyme catalyses shikimate + NADP(+) = 3-dehydroshikimate + NADPH + H(+). It functions in the pathway metabolic intermediate biosynthesis; chorismate biosynthesis; chorismate from D-erythrose 4-phosphate and phosphoenolpyruvate: step 4/7. Involved in the biosynthesis of the chorismate, which leads to the biosynthesis of aromatic amino acids. Catalyzes the reversible NADPH linked reduction of 3-dehydroshikimate (DHSA) to yield shikimate (SA). The sequence is that of Shikimate dehydrogenase (NADP(+)) from Bordetella bronchiseptica (strain ATCC BAA-588 / NCTC 13252 / RB50) (Alcaligenes bronchisepticus).